A 149-amino-acid chain; its full sequence is Large ribosomal subunit protein bL9 (149 aa).

The protein belongs to the bacterial ribosomal protein bL9 family.

In terms of biological role, binds to the 23S rRNA. The sequence is that of Large ribosomal subunit protein bL9 from Geobacillus kaustophilus (strain HTA426).